Here is a 151-residue protein sequence, read N- to C-terminus: Prefoldin subunit 5 (151 aa).

A coiled-coil region spans residues 15 to 35 (IDQLKALKEQADLEVNLLQDS).

Belongs to the prefoldin subunit alpha family. As to quaternary structure, heterohexamer of two PFD-alpha type and four PFD-beta type subunits forming prefoldin co-chaperone complex. Interacts with PFD6. Binds to the DELLA protein GAI.

The protein resides in the cytoplasm. Its subcellular location is the nucleus. Binds specifically to cytosolic chaperonin (c-CPN) and transfers target proteins to it. Binds to nascent polypeptide chain and promotes folding in an environment in which there are many competing pathways for nonnative proteins. Together with other chaperonins, contribute to the regulation of gene expression by modulating the spliceosome function on pre-mRNA splicing post-transcriptionally by acting as a co-chaperone of Hsp90 to control levels of LSM8. Required for the biogenesis of tubulins and for subsequent microtubules (MTs) organization and dynamicity. Necessary for tolerance to NaCl salt stress. Involved in the process leading to microtubules dissociation in response to gibberellic acid (GA) probably due to the DELLA proteins-mediated translocation of the prefoldin co-chaperone complex from the cytoplasm to the nucleus. Prevents cold acclimation (e.g. 7 days at 4 degrees Celsius) in a DELLA proteins-dependent manner by promoting nuclear proteasome-mediated HY5 degradation, thus modulating the expression of several genes and reducing anthocyanin biosynthesis, but seems not involved in constitutive freezing tolerance. Contributes to the GA-dependent regulation of PIN2 trafficking at the plasma membrane, thus influencing auxin flux. This chain is Prefoldin subunit 5, found in Arabidopsis thaliana (Mouse-ear cress).